Here is a 747-residue protein sequence, read N- to C-terminus: Ubiquitin carboxyl-terminal hydrolase 13 (747 aa).

The USP domain maps to 140-668 (FGYENFGNTC…TAYVLFYKAM (529 aa)). Catalysis depends on cysteine 149, which acts as the Nucleophile. Disordered stretches follow at residues 172-305 (PKKS…RPPD) and 318-367 (YENP…RKKS). Positions 174–183 (KSRESDQPRK) are enriched in basic and acidic residues. The residue at position 198 (serine 198) is a Phosphoserine. The segment covering 225-235 (PVNSVNSNTAG) has biased composition (polar residues). The span at 251–260 (HVQDNNKKEG) shows a compositional bias: basic and acidic residues. The segment covering 319 to 343 (ENPSRGSSNSNNLDLKGESNSSLST) has biased composition (polar residues). Histidine 619 functions as the Proton acceptor in the catalytic mechanism.

It belongs to the peptidase C19 family.

It catalyses the reaction Thiol-dependent hydrolysis of ester, thioester, amide, peptide and isopeptide bonds formed by the C-terminal Gly of ubiquitin (a 76-residue protein attached to proteins as an intracellular targeting signal).. The polypeptide is Ubiquitin carboxyl-terminal hydrolase 13 (UBP13) (Saccharomyces cerevisiae (strain ATCC 204508 / S288c) (Baker's yeast)).